We begin with the raw amino-acid sequence, 344 residues long: L-rhamnose-proton symporter (344 aa).

A run of 10 helical transmembrane segments spans residues 4-24 (AITMGIFWHLIGAASAACFYA), 38-58 (WSVGGIVSWIILPWAISALLL), 68-88 (FSLSTLLPVFLFGAMWGIGNI), 101-121 (MGIGIAIGITLIVGTLMTPII), 137-157 (TLLGVLVALIGVGIVTRAGQL), 175-195 (LVLAVMCGIFSAGMSFAMNAA), 214-234 (LPSYVVIMGGGAIINLGFCFI), 259-279 (VLLSALGGLMWYLQFFFYAWG), 290-310 (ISWMLHMSFYVLCGGIVGLVL), and 323-343 (VLSLGCVVIIVAANIVGIGMA).

The protein belongs to the L-rhamnose transporter (TC 2.A.7.6) family.

It is found in the cell inner membrane. It carries out the reaction L-rhamnopyranose(in) + H(+)(in) = L-rhamnopyranose(out) + H(+)(out). Its function is as follows. Uptake of L-rhamnose across the cytoplasmic membrane with the concomitant transport of protons into the cell (symport system). The sequence is that of L-rhamnose-proton symporter from Shigella flexneri.